Reading from the N-terminus, the 421-residue chain is Polygalacturonase (421 aa).

The signal sequence occupies residues 1–20 (MKFSTAIIVSFLFIADFCAA). 2 N-linked (GlcNAc...) asparagine glycosylation sites follow: asparagine 156 and asparagine 180. 2 PbH1 repeats span residues 178 to 204 (CKNI…HMGK) and 205 to 226 (STDV…SIGD). The active-site Proton donor is aspartate 219. Histidine 242 is an active-site residue. PbH1 repeat units follow at residues 258–279 (VEGI…RIKT) and 289–310 (VSDI…IIDQ). Asparagine 265 carries N-linked (GlcNAc...) asparagine glycosylation. The segment at 394–421 (PGAPAASTTATPAASKTATPAAGKSPAK) is disordered.

The protein belongs to the glycosyl hydrolase 28 family. As to expression, pollen specific.

Its subcellular location is the secreted. It is found in the cell wall. It carries out the reaction (1,4-alpha-D-galacturonosyl)n+m + H2O = (1,4-alpha-D-galacturonosyl)n + (1,4-alpha-D-galacturonosyl)m.. May function in the depolymerization of the pectin in its walls during pollen tube elongation, or in that of the pistil during pollination. This chain is Polygalacturonase, found in Medicago sativa (Alfalfa).